The primary structure comprises 845 residues: MEEKKVVRALSEHLSLPPPPSPSVAVAINGKKKSKYVVFWALEKFIPEGFTDFKLLYVRPPVSYIPTPMGIAVAVSELREDVVSAYKQELDWSANEMLRPYKKMFERRKVQVEVLLLDSLEPAAAIAEEIAGTGVTKLVIGMSLRGFFSRKIDMSSLIATAVPRFCTVYVISKGKLASVRPSESDASGSIRFERSSSTSGSTDSPRLPPEYQDFLSAVSEAQSRVSPFSPALKHSMGSNAVAQMDTSSSGTDQEEVSTGRGMEIVHSGIEGKKNKDESFSASFPMGTEAYNSMSWTSKWRDHEDRREMRSSSSSNNHDLVNMDWGAVVPENYSWVSHTASHMSDGLLSVHSITDNQVNLNFEIEKLRAELKHVQEMYAMAQTETVGASKKLTELNQRRFEESEKLVELKEKEEVAKDTASKEKQRYEEAMKEAEKVKELMMKEALHRREAEFKAERDAREKDKLQASLVSPGVQYQHYTWEEIAAATSDFAENLKIGIGAYGSVYKCNLHHTTGAVKVLHAGETQLSKQFDQELEILSKIRHPHLVLLLGACPERGCLVYEYMDNGSLDDRLMLVNDTPPIPWFERFRIALEVASALVFLHKSKPRPIIHRDLKPGNILLDHNFVSKLGDVGLSTMVNQDDVSSRTIFKQTSPVGTLCYIDPEYQRTGIISPKSDVYSLGVVILQLITAKPAIAITHMVEEAIGDDAEFMAILDKKAGSWPISDTRELAALGLCCTEMRRRDRPDLKDQIIPALERLRKVADKAQNLLSRTPSGPPSHFICPLLKGVMNEPCVAADGYTYDREAIEEWLRQKDTSPVTNLPLPNKNLIANYTLYSAIMEWKSNKR.

2 disordered regions span residues R180–E210 and S229–T258. Residues S187–S204 show a composition bias toward low complexity. A compositionally biased stretch (polar residues) spans M236–T251. The stretch at S351–L468 forms a coiled coil. The 265-residue stretch at F490–L754 folds into the Protein kinase domain. Residues I496 to V504 and K517 each bind ATP. D612 serves as the catalytic Proton acceptor. One can recognise a U-box domain in the interval G774 to R845.

The protein belongs to the protein kinase superfamily. Ser/Thr protein kinase family.

It catalyses the reaction L-seryl-[protein] + ATP = O-phospho-L-seryl-[protein] + ADP + H(+). The catalysed reaction is L-threonyl-[protein] + ATP = O-phospho-L-threonyl-[protein] + ADP + H(+). It carries out the reaction S-ubiquitinyl-[E2 ubiquitin-conjugating enzyme]-L-cysteine + [acceptor protein]-L-lysine = [E2 ubiquitin-conjugating enzyme]-L-cysteine + N(6)-ubiquitinyl-[acceptor protein]-L-lysine.. Its pathway is protein modification; protein ubiquitination. In terms of biological role, functions as an E3 ubiquitin ligase. The polypeptide is U-box domain-containing protein 52 (PUB52) (Arabidopsis thaliana (Mouse-ear cress)).